We begin with the raw amino-acid sequence, 608 residues long: 1-deoxy-D-xylulose-5-phosphate synthase (608 aa).

Thiamine diphosphate contacts are provided by residues His-66 and 107-109 (GHA). A Mg(2+)-binding site is contributed by Asp-138. Thiamine diphosphate contacts are provided by residues 139-140 (GA), Asn-167, Phe-277, and Glu-350. Mg(2+) is bound at residue Asn-167.

Belongs to the transketolase family. DXPS subfamily. Homodimer. It depends on Mg(2+) as a cofactor. Requires thiamine diphosphate as cofactor.

The catalysed reaction is D-glyceraldehyde 3-phosphate + pyruvate + H(+) = 1-deoxy-D-xylulose 5-phosphate + CO2. Its pathway is metabolic intermediate biosynthesis; 1-deoxy-D-xylulose 5-phosphate biosynthesis; 1-deoxy-D-xylulose 5-phosphate from D-glyceraldehyde 3-phosphate and pyruvate: step 1/1. Its function is as follows. Catalyzes the acyloin condensation reaction between C atoms 2 and 3 of pyruvate and glyceraldehyde 3-phosphate to yield 1-deoxy-D-xylulose-5-phosphate (DXP). This is 1-deoxy-D-xylulose-5-phosphate synthase from Thermotoga maritima (strain ATCC 43589 / DSM 3109 / JCM 10099 / NBRC 100826 / MSB8).